A 184-amino-acid polypeptide reads, in one-letter code: Adenine phosphoribosyltransferase (184 aa).

This sequence belongs to the purine/pyrimidine phosphoribosyltransferase family. Homodimer.

It localises to the cytoplasm. It carries out the reaction AMP + diphosphate = 5-phospho-alpha-D-ribose 1-diphosphate + adenine. Its pathway is purine metabolism; AMP biosynthesis via salvage pathway; AMP from adenine: step 1/1. Functionally, catalyzes a salvage reaction resulting in the formation of AMP, that is energically less costly than de novo synthesis. The protein is Adenine phosphoribosyltransferase of Acidovorax sp. (strain JS42).